Here is a 1702-residue protein sequence, read N- to C-terminus: Immunoglobulin A1 protease autotransporter (1702 aa).

The first 25 residues, 1–25, serve as a signal peptide directing secretion; the sequence is MLNKKFKLNFIALTVAYALTPYTEA. Residues 26–332 form the Peptidase S6 domain; that stretch reads ALVRDDVDYQ…NIYKPEFAKT (307 aa). S288 is a catalytic residue. The interval 991–1411 is disordered; that stretch reads VEKRNQTVDT…GSDRSTVALR (421 aa). Positions 997–1021 are enriched in polar residues; the sequence is TVDTTNITTPNNIQADVPSVPSNNE. The span at 1037-1047 shows a compositional bias: low complexity; the sequence is TPSETTETVAE. Residues 1049–1061 show a composition bias toward basic and acidic residues; that stretch reads SKQESKTVEKNEQ. Positions 1082-1095 are enriched in polar residues; the sequence is KANTQTNEVAQSGS. Basic and acidic residues-rich tracts occupy residues 1104–1132 and 1150–1162; these read EIKE…KDEI and APKE…KVEE. Repeat copies occupy residues 1109–1116 and 1117–1124. The segment at 1109 to 1124 is 2 X 8 AA tandem repeats of A-K-V-E-K-E-E-K; the sequence is AKVEKEEKAKVEKEEK. Composition is skewed to polar residues over residues 1163–1186 and 1207–1218; these read TQVQ…SPNS and VSKNQTENTTDQ. Basic and acidic residues predominate over residues 1219 to 1234; the sequence is PTEREKTAKVETEKTQ. Composition is skewed to polar residues over residues 1235 to 1255, 1263 to 1305, and 1316 to 1341; these read EPPQ…TVQP, NVPT…TAIT, and TETA…VANN. Positions 1360–1378 are enriched in low complexity; it reads ETSAEETTAASTDETTIAD. Over residues 1382-1392 the composition is skewed to basic residues; the sequence is RSKPNRRSRRS. Residues 1450-1702 enclose the Autotransporter domain; the sequence is NNEGQYNVWV…TAELKLSFSF (253 aa).

Its subcellular location is the periplasm. The protein resides in the secreted. It localises to the cell surface. The protein localises to the cell outer membrane. It carries out the reaction Cleavage of immunoglobulin A molecules at certain Pro-|-Xaa bonds in the hinge region. No small molecule substrates are known.. Its function is as follows. Virulence factor; cleaves host immunoglobulin A producing intact Fc and Fab fragments. The sequence is that of Immunoglobulin A1 protease autotransporter (iga) from Haemophilus influenzae.